Consider the following 590-residue polypeptide: Potassium-transporting ATPase potassium-binding subunit (590 aa).

Helical transmembrane passes span 3–23, 63–83, 134–154, 177–197, 284–304, 312–332, 359–379, 388–408, 411–431, 451–471, 515–535, and 558–578; these read AFLL…KPLG, HYAL…YALQ, GLAV…IALI, VYVL…QGVI, FVQM…FGGM, WAVL…LAWA, FGIV…CGAV, ALGG…FGGV, GLYG…LMIG, IAIL…VVVT, LALG…VLAM, and LFVV…YIPA.

Belongs to the KdpA family. The system is composed of three essential subunits: KdpA, KdpB and KdpC.

Its subcellular location is the cell inner membrane. Its function is as follows. Part of the high-affinity ATP-driven potassium transport (or Kdp) system, which catalyzes the hydrolysis of ATP coupled with the electrogenic transport of potassium into the cytoplasm. This subunit binds the periplasmic potassium ions and delivers the ions to the membrane domain of KdpB through an intramembrane tunnel. The protein is Potassium-transporting ATPase potassium-binding subunit of Ralstonia pickettii (strain 12J).